Reading from the N-terminus, the 440-residue chain is Chromosomal replication initiator protein DnaA (440 aa).

The segment at 1–74 (MNPSQILENL…VQSGNKAIIN (74 aa)) is domain I, interacts with DnaA modulators. A domain II region spans residues 74–99 (NIQAQSAKQSNKSTKIDIAHIKAQST). Residues 100 to 316 (ILNPSFTFDS…GIIISLNAYA (217 aa)) form a domain III, AAA+ region region. 4 residues coordinate ATP: glycine 146, glycine 148, lysine 149, and threonine 150. Residues 317-440 (TILGQEITLE…KNKILVKSQS (124 aa)) are domain IV, binds dsDNA.

The protein belongs to the DnaA family. In terms of assembly, oligomerizes as a right-handed, spiral filament on DNA at oriC.

It localises to the cytoplasm. Its function is as follows. Plays an essential role in the initiation and regulation of chromosomal replication. ATP-DnaA binds to the origin of replication (oriC) to initiate formation of the DNA replication initiation complex once per cell cycle. Binds the DnaA box (a 9 base pair repeat at the origin) and separates the double-stranded (ds)DNA. Forms a right-handed helical filament on oriC DNA; dsDNA binds to the exterior of the filament while single-stranded (ss)DNA is stabiized in the filament's interior. The ATP-DnaA-oriC complex binds and stabilizes one strand of the AT-rich DNA unwinding element (DUE), permitting loading of DNA polymerase. After initiation quickly degrades to an ADP-DnaA complex that is not apt for DNA replication. Binds acidic phospholipids. The chain is Chromosomal replication initiator protein DnaA from Campylobacter jejuni subsp. jejuni serotype O:23/36 (strain 81-176).